Reading from the N-terminus, the 190-residue chain is Large ribosomal subunit protein bL9 (190 aa).

It belongs to the bacterial ribosomal protein bL9 family.

Binds to the 23S rRNA. The sequence is that of Large ribosomal subunit protein bL9 from Methylorubrum extorquens (strain CM4 / NCIMB 13688) (Methylobacterium extorquens).